Consider the following 252-residue polypeptide: Methionine aminopeptidase (252 aa).

A substrate-binding site is contributed by His76. Positions 93, 104, and 168 each coordinate a divalent metal cation. Substrate is bound at residue His175. A divalent metal cation is bound by residues Glu202 and Glu233.

It belongs to the peptidase M24A family. Methionine aminopeptidase type 1 subfamily. In terms of assembly, monomer. The cofactor is Co(2+). It depends on Zn(2+) as a cofactor. Mn(2+) is required as a cofactor. Fe(2+) serves as cofactor.

It catalyses the reaction Release of N-terminal amino acids, preferentially methionine, from peptides and arylamides.. Removes the N-terminal methionine from nascent proteins. The N-terminal methionine is often cleaved when the second residue in the primary sequence is small and uncharged (Met-Ala-, Cys, Gly, Pro, Ser, Thr, or Val). Requires deformylation of the N(alpha)-formylated initiator methionine before it can be hydrolyzed. This Staphylococcus aureus (strain MRSA252) protein is Methionine aminopeptidase.